The primary structure comprises 385 residues: Transmembrane protein 271 (385 aa).

A run of 2 helical transmembrane segments spans residues 9-29 and 50-70; these read CAAL…AVGL and GAFY…AALL. The tract at residues 83 to 111 is disordered; sequence EPGPGLGVPAAPAGAPEATPGESGAAAGA. Residues 121 to 141 traverse the membrane as a helical segment; sequence LLLGVLVFMLGVLSAFAGAVI. The disordered stretch occupies residues 160–203; the sequence is PRAPGSSPGSAPGSTPGSAPGSAPGSAPGSAPGAPRARSTLDSA. Over residues 163–197 the composition is skewed to low complexity; sequence PGSSPGSAPGSTPGSAPGSAPGSAPGSAPGAPRAR. Residues 219-239 form a helical membrane-spanning segment; that stretch reads VLSTVFNSLECLLGLLSLLLV. Residues 245–305 form a disordered region; the sequence is SQARRGRRGR…SEASILSPEE (61 aa). The span at 246-258 shows a compositional bias: basic residues; that stretch reads QARRGRRGRRRGG. The segment covering 259–277 has biased composition (low complexity); that stretch reads RALARPRGGSGLRAQPPAS. Residues 278–292 are compositionally biased toward basic residues; the sequence is RARRGRRGRRGRRLQ.

The protein resides in the membrane. The polypeptide is Transmembrane protein 271 (Homo sapiens (Human)).